The following is a 1805-amino-acid chain: Kinesin-like protein KIF13A (1805 aa).

The Kinesin motor domain occupies 5-352; the sequence is KVKVAVRVRP…LRYADRAKRI (348 aa). 102-109 provides a ligand contact to ATP; the sequence is GQTGSGKS. A coiled-coil region spans residues 359–436; it reads NEDPNAKVIR…QLESMGISLE (78 aa). The region spanning 469–519 is the FHA domain; the sequence is HTRVGADTSQDIQLFGIGIQPQHCEIDIASDGDVTLTPKENARSCVNGTLV. Over residues 556 to 567 the composition is skewed to basic and acidic residues; the sequence is EKETGPPEHDLD. Disordered stretches follow at residues 556–575 and 633–656; these read EKETGPPEHDLDAASEASSE and QQLSPDRQPQSSGPDRLAYSSQTA. Coiled coils occupy residues 602 to 775 and 1100 to 1138; these read VQVL…LYGK and DALIKRREYLDEQIKKVSNKTEKTEDDVEREAQLVEQWV. Phosphoserine is present on serine 636. At serine 1287 the chain carries Phosphoserine. Over residues 1385 to 1396 the composition is skewed to polar residues; that stretch reads TPNVHNVSSSRP. The interval 1385 to 1404 is disordered; the sequence is TPNVHNVSSSRPDLSGFDED. Residues serine 1454, isoleucine 1481, serine 1490, and methionine 1494 each carry the phosphoserine modification. Residues 1507–1531 are disordered; it reads PSGSNGSSMPVEHNSKREKKIDSEE. Residues 1518-1547 are a coiled coil; that stretch reads EHNSKREKKIDSEEEENELEAINRKLISSQ. The span at 1519-1528 shows a compositional bias: basic and acidic residues; it reads HNSKREKKID. 2 positions are modified to phosphoserine: serine 1529 and serine 1572. A compositionally biased stretch (low complexity) spans 1612 to 1621; sequence MVVPSSDSSD. The disordered stretch occupies residues 1612-1645; that stretch reads MVVPSSDSSDQLAIQTKDADSTEHSTPSLVHDFR. Phosphoserine occurs at positions 1648 and 1698. Positions 1749–1779 are disordered; that stretch reads GLTDSSAGELSSRRSLPNKTGGKTVSDGLHH. Over residues 1751 to 1771 the composition is skewed to polar residues; sequence TDSSAGELSSRRSLPNKTGGK.

Belongs to the TRAFAC class myosin-kinesin ATPase superfamily. Kinesin family. In terms of assembly, interacts with AP2B1. Interacts with ZFYVE26. Interacts with AP1G1 and AP1G2. Widely expressed, with highest levels in heart, brain and skeletal muscle.

The protein localises to the cytoplasm. It localises to the cytoskeleton. It is found in the microtubule organizing center. The protein resides in the centrosome. Its subcellular location is the midbody. The protein localises to the endosome membrane. It localises to the golgi apparatus membrane. Its function is as follows. Plus end-directed microtubule-dependent motor protein involved in intracellular transport and regulating various processes such as mannose-6-phosphate receptor (M6PR) transport to the plasma membrane, endosomal sorting during melanosome biogenesis and cytokinesis. Mediates the transport of M6PR-containing vesicles from trans-Golgi network to the plasma membrane via direct interaction with the AP-1 complex. During melanosome maturation, required for delivering melanogenic enzymes from recycling endosomes to nascent melanosomes by creating peripheral recycling endosomal subdomains in melanocytes. Also required for the abscission step in cytokinesis: mediates translocation of ZFYVE26, and possibly TTC19, to the midbody during cytokinesis. This chain is Kinesin-like protein KIF13A (KIF13A), found in Homo sapiens (Human).